We begin with the raw amino-acid sequence, 242 residues long: DnaJ homolog subfamily B member 6 (242 aa).

A J domain is found at 2–69 (VDYYEVLGVQ…KKRDIYDRYG (68 aa)). Residues 2 to 146 (VDYYEVLGVQ…TGSFFSTFSG (145 aa)) are interaction with HSP70. The tract at residues 119–242 (FEDFFGHRRG…KEQLLRLDNK (124 aa)) is interaction with KRT18. Arg135 carries the post-translational modification Omega-N-methylarginine.

As to quaternary structure, homooligomer. Interacts with BAG3, HSPB8 and STUB1. Interacts with ALKBH1. Interacts with HSP70, KRT18 and PTTG. In terms of tissue distribution, expressed in all tissues examined with highest expression in brain and retina and lower levels observed in testis, spleen, heart, liver and kidney.

The protein localises to the cytoplasm. The protein resides in the perinuclear region. It localises to the nucleus. It is found in the myofibril. Its subcellular location is the sarcomere. The protein localises to the z line. In terms of biological role, has a stimulatory effect on the ATPase activity of HSP70 in a dose-dependent and time-dependent manner and hence acts as a co-chaperone of HSP70. Plays an indispensable role in the organization of KRT8/KRT18 filaments. Acts as an endogenous molecular chaperone for neuronal proteins including huntingtin. Suppresses aggregation and toxicity of polyglutamine-containing, aggregation-prone proteins. Also reduces cellular toxicity and caspase-3 activity. The chain is DnaJ homolog subfamily B member 6 (DNAJB6) from Bos taurus (Bovine).